Consider the following 497-residue polypeptide: MKYLERLTPSCWRIKPGFVPNMKVEGRFYVNKALEALMLEELQQFASARGVGGFLPAVKQIANVASLPGIVGASVGLPDVHSGYGFAIGNMAAFDMDDPEAIVSPGGVGFDINCGVRLLRTNLTLEDVEPVKEQLAQSLFDHIPVGVGSKGVIPMNAKDLEEALEMGMDWSLREGYAWAEDKEHCEEYGRMLQADASKVSARAKKRGLPQLGTLGAGNHYAEIQVVEEIYDKEAAAKMGINKKNQICVMIHSGSRGLGHQVATDALVAMEKAMKRDGIEVNDRQLACARIHSEEGQNYLKAMAAAANYAWVNRSTMTFLCRQAFAKQFNTTPEELDMHVIYDVSHNIAKTERHMVNGTERTLLVHRKGSTRAFPPHHPLIPVDYQLIGQPVLIGGTMGTCSYVLTGTDTGFRDTFGSTCHGAGRALSRAKSRRTLDYQQVLDKLDKKGIAIRVASPKLVMEEAPESYKDVTAVVDTCHAAGISKKVVKLRPIAVIKG.

Aspartate 111, cysteine 114, histidine 219, histidine 251, and histidine 345 together coordinate Mn(2+). A GMP-binding site is contributed by asparagine 218 to glutamate 222. GMP-binding positions include histidine 345–asparagine 346, glycine 394–methionine 397, serine 401, histidine 420–glycine 423, and lysine 496. The active-site GMP-histidine intermediate is histidine 420.

This sequence belongs to the RtcB family. In terms of assembly, catalytic component of the tRNA-splicing ligase complex. The cofactor is Mn(2+).

It carries out the reaction a 3'-end 3'-phospho-ribonucleotide-RNA + a 5'-end dephospho-ribonucleoside-RNA + GTP = a ribonucleotidyl-ribonucleotide-RNA + GMP + diphosphate. It catalyses the reaction a 3'-end 2',3'-cyclophospho-ribonucleotide-RNA + a 5'-end dephospho-ribonucleoside-RNA + GTP + H2O = a ribonucleotidyl-ribonucleotide-RNA + GMP + diphosphate + H(+). Its function is as follows. Catalytic subunit of the tRNA-splicing ligase complex that acts by directly joining spliced tRNA halves to mature-sized tRNAs by incorporating the precursor-derived splice junction phosphate into the mature tRNA as a canonical 3',5'-phosphodiester. May act as an RNA ligase with broad substrate specificity, and may function toward other RNAs. The chain is RNA-splicing ligase RtcB homolog from Monosiga brevicollis (Choanoflagellate).